The following is a 48-amino-acid chain: Omega-agatoxin-Aa5a (48 aa).

4 disulfides stabilise this stretch: C3–C16, C10–C21, C15–C32, and C23–C30.

Belongs to the neurotoxin 02 (plectoxin) family. Expressed by the venom gland.

Its subcellular location is the secreted. In terms of biological role, the toxin blocks voltage-gated calcium channels in rat cerebellar granule cells (IC(50)=200 nM). The sequence is that of Omega-agatoxin-Aa5a from Agelenopsis aperta (North American funnel-web spider).